The chain runs to 128 residues: 3-aminoacrylate deaminase RutC (128 aa).

It belongs to the RutC family.

The enzyme catalyses (Z)-3-aminoacrylate + H2O + H(+) = 3-oxopropanoate + NH4(+). Functionally, involved in pyrimidine catabolism. Catalyzes the deamination of 3-aminoacrylate to malonic semialdehyde, a reaction that can also occur spontaneously. RutC may facilitate the reaction and modulate the metabolic fitness, rather than catalyzing essential functions. The sequence is that of 3-aminoacrylate deaminase RutC from Serratia proteamaculans (strain 568).